We begin with the raw amino-acid sequence, 529 residues long: F-box/LRR-repeat protein At5g63520 (529 aa).

The disordered stretch occupies residues 1–22; that stretch reads MAEVSLTKKEMTTKGKSENSKK. The F-box domain occupies 31–78; the sequence is VPIAAMNEDLLHNILLRLPAKSFAFASCVNRFWSSVCNRILSRPKMIS. 2 LRR repeats span residues 265 to 288 and 418 to 441; these read GNEP…IFAR and QVYL…LRNL.

The protein is F-box/LRR-repeat protein At5g63520 of Arabidopsis thaliana (Mouse-ear cress).